Reading from the N-terminus, the 2561-residue chain is Plipastatin synthase subunit A (2561 aa).

Positions 1–1038 (MSEHTYSLTH…ATVIREGTDS (1038 aa)) are domain 1 (glutamate-activating). The condensation 1 stretch occupies residues 2-300 (SEHTYSLTHA…SSLPIRITVD (299 aa)). The interval 485–888 (TYAELDMYAS…SIEGVREAAV (404 aa)) is adenylation 1. In terms of domain architecture, Carrier 1 spans 961-1036 (APRNVTEMKL…GLATVIREGT (76 aa)). Ser-996 carries the O-(pantetheine 4'-phosphoryl)serine modification. The interval 1048-1338 (KQETYPVSSA…NTLALRTRPE (291 aa)) is condensation 2. Residues 1048–2554 (KQETYPVSSA…ELTLSALSSI (1507 aa)) form a domain 2 (D-ornithine-activating) region. The interval 1525-1932 (SYRLLNERAN…QTGLVREAAV (408 aa)) is adenylation 2. The region spanning 2007–2081 (APVNDLQKTM…ELCGHITPLA (75 aa)) is the Carrier 2 domain. Ser-2042 is subject to O-(pantetheine 4'-phosphoryl)serine. Positions 2089-2554 (AEGEAELTPI…ELTLSALSSI (466 aa)) are epimerization.

The protein belongs to the ATP-dependent AMP-binding enzyme family. The cofactor is pantetheine 4'-phosphate.

In terms of biological role, this protein is a multifunctional enzyme, able to activate and polymerize the amino acids Glu and Orn as part of the biosynthesis of the lipopeptide antibiotic lipastatin. The Orn residue is further epimerized to the D-isomer form. The activation sites for these amino acids consist of individual domains. The protein is Plipastatin synthase subunit A (ppsA) of Bacillus subtilis (strain 168).